A 20-amino-acid polypeptide reads, in one-letter code: Alkaline phosphatase (20 aa).

The interval 1-20 is disordered; sequence TDMLAVSVSSTDAIGHKYGT.

As to quaternary structure, homodimer; may be disulfide-linked. The N-terminus is blocked.

It carries out the reaction a phosphate monoester + H2O = an alcohol + phosphate. Its activity is regulated as follows. Completely inhibited by thiol-reducing agents, such as DTT and 2-mercaptoethanol. Activity was also inhibited by sodium orthovanadate, sodium molybdate, N-ethylmaleimide, EDTA and zinc ion, but was not inhibited by okadaic acid. Its function is as follows. Acts against tyrosine-phosphatases. In Prevotella intermedia, this protein is Alkaline phosphatase.